A 24-amino-acid chain; its full sequence is L-amino-acid oxidase (24 aa).

It belongs to the flavin monoamine oxidase family. FIG1 subfamily. In terms of assembly, homodimer; non-covalently linked. Requires FAD as cofactor. In terms of processing, N-glycosylated. In terms of tissue distribution, expressed by the venom gland.

The protein resides in the secreted. It catalyses the reaction an L-alpha-amino acid + O2 + H2O = a 2-oxocarboxylate + H2O2 + NH4(+). Catalyzes an oxidative deamination of predominantly hydrophobic and aromatic L-amino acids, thus producing hydrogen peroxide that may contribute to the diverse toxic effects of this enzyme. Exhibits diverse biological activities, such as hemorrhage, hemolysis, edema, apoptosis, and antiparasitic activities. This protein has antibacterial activity (against E.coli, S.aureus, and B.dysenteriae), cytotoxic activity, as well as an ability to induce platelet aggregation. Effects of snake L-amino oxidases on platelets are controversial, since they either induce aggregation or inhibit agonist-induced aggregation. These different effects are probably due to different experimental conditions. This is L-amino-acid oxidase from Protobothrops mucrosquamatus (Taiwan habu).